Reading from the N-terminus, the 260-residue chain is MKPIVKWSGGKTDELKRFEDYIPSDCSTFIEPFAGGAATFFHVGNQFENKVLSDVHVELVALYRAIANGKSQAIYDFMKSHANDEKTYYEVRSWKPEDYVDVASRFYYLRKTCFRGMMRYNKNGGFNVPFGRYKTYNFEDIINEEYYNILKDTIILEKSFDYIFETYNDSSNFVFLDPPYDSVFTDYGYCSFGKEEHVRLSNFFKTTKNKCLMVIGATDFIRELYDGYIHTEYEKKYRFKLHSGRVGDEINTTHLVIKNY.

S-adenosyl-L-methionine is bound by residues W7, K11, D54, and D177.

It belongs to the N(4)/N(6)-methyltransferase family.

The enzyme catalyses a 2'-deoxyadenosine in DNA + S-adenosyl-L-methionine = an N(6)-methyl-2'-deoxyadenosine in DNA + S-adenosyl-L-homocysteine + H(+). In terms of biological role, a alpha subtype methylase, recognizes the double-stranded sequence 5'-GANTC-3', methylates A-2 on both strands, and protects the DNA from cleavage by the CviBI endonuclease. This is Type II methyltransferase M.CviBI from Paramecium bursaria Chlorella virus NC1A (PBCV-NC1A).